The sequence spans 82 residues: Three-finger toxin MicTx3 (82 aa).

An N-terminal signal peptide occupies residues Met1–Thr21. 4 cysteine pairs are disulfide-bonded: Cys24–Cys44, Cys38–Cys59, Cys63–Cys74, and Cys75–Cys80.

This sequence belongs to the three-finger toxin family. Short-chain subfamily. In terms of tissue distribution, expressed by the venom gland.

Its subcellular location is the secreted. In terms of biological role, has been described to inhibit nicotinic acetylcholine receptor (nAChR) alpha-7/CHRNA7 subunits and to bind acetylcholine binding protein (AChBP) (Kd=29.5 nM). This is Three-finger toxin MicTx3 from Micrurus corallinus (Brazilian coral snake).